The primary structure comprises 502 residues: Mannitol 2-dehydrogenase (502 aa).

Residue 37–48 participates in NAD(+) binding; that stretch reads IVHVGVGGFHRA.

The protein belongs to the mannitol dehydrogenase family. Monomer.

It catalyses the reaction D-mannitol + NAD(+) = D-fructose + NADH + H(+). Catalyzes the NAD(H)-dependent interconversion of D-fructose and D-mannitol in the mannitol metabolic pathway. This Aspergillus terreus (strain NIH 2624 / FGSC A1156) protein is Mannitol 2-dehydrogenase.